Consider the following 250-residue polypeptide: 1-acyl-sn-glycerol-3-phosphate acyltransferase (250 aa).

The HXXXXD motif signature appears at 88 to 93 (HIAAMD).

This sequence belongs to the 1-acyl-sn-glycerol-3-phosphate acyltransferase family.

It carries out the reaction a 1-acyl-sn-glycero-3-phosphate + an acyl-CoA = a 1,2-diacyl-sn-glycero-3-phosphate + CoA. The protein operates within phospholipid metabolism; CDP-diacylglycerol biosynthesis; CDP-diacylglycerol from sn-glycerol 3-phosphate: step 2/3. Converts lysophosphatidic acid (LPA) into phosphatidic acid by incorporating acyl moiety at the 2 position. This is 1-acyl-sn-glycerol-3-phosphate acyltransferase (plsC) from Borreliella burgdorferi (strain ATCC 35210 / DSM 4680 / CIP 102532 / B31) (Borrelia burgdorferi).